Consider the following 837-residue polypeptide: Protein translocase subunit SecA (837 aa).

Residues Gln85, 103–107 (GEGKT), and Asp493 each bind ATP. Zn(2+)-binding residues include Cys821, Cys823, Cys832, and His833.

It belongs to the SecA family. As to quaternary structure, monomer and homodimer. Part of the essential Sec protein translocation apparatus which comprises SecA, SecYEG and auxiliary proteins SecDF. Other proteins may also be involved. Zn(2+) serves as cofactor.

It localises to the cell membrane. Its subcellular location is the cytoplasm. It catalyses the reaction ATP + H2O + cellular proteinSide 1 = ADP + phosphate + cellular proteinSide 2.. Part of the Sec protein translocase complex. Interacts with the SecYEG preprotein conducting channel. Has a central role in coupling the hydrolysis of ATP to the transfer of proteins into and across the cell membrane, serving as an ATP-driven molecular motor driving the stepwise translocation of polypeptide chains across the membrane. The polypeptide is Protein translocase subunit SecA (Streptococcus pneumoniae (strain ATCC BAA-255 / R6)).